Consider the following 688-residue polypeptide: Methionine--tRNA ligase (688 aa).

The 'HIGH' region signature appears at 15–25 (PYANGPIHLGH). Zn(2+) is bound by residues Cys-146, Cys-149, Cys-159, and Cys-162. Residues 332 to 336 (KMSKS) carry the 'KMSKS' region motif. Lys-335 provides a ligand contact to ATP. Residues 552–576 (AEAPKKADSKKATDTPVDTRPPLES) form a disordered region. Residues 554–564 (APKKADSKKAT) show a composition bias toward basic and acidic residues. The region spanning 587–688 (DFAKIDLRIA…EGAQPGMRVK (102 aa)) is the tRNA-binding domain.

This sequence belongs to the class-I aminoacyl-tRNA synthetase family. MetG type 1 subfamily. As to quaternary structure, homodimer. Zn(2+) serves as cofactor.

It localises to the cytoplasm. The catalysed reaction is tRNA(Met) + L-methionine + ATP = L-methionyl-tRNA(Met) + AMP + diphosphate. Its function is as follows. Is required not only for elongation of protein synthesis but also for the initiation of all mRNA translation through initiator tRNA(fMet) aminoacylation. The sequence is that of Methionine--tRNA ligase from Shewanella woodyi (strain ATCC 51908 / MS32).